The primary structure comprises 275 residues: Dermonecrotic toxin SpeSicTox-betaIIA2i (275 aa).

The active site involves His-5. Mg(2+) contacts are provided by Glu-25 and Asp-27. Catalysis depends on His-41, which acts as the Nucleophile. Intrachain disulfides connect Cys-45–Cys-51 and Cys-47–Cys-190. Asp-85 contributes to the Mg(2+) binding site.

It belongs to the arthropod phospholipase D family. Class II subfamily. The cofactor is Mg(2+). As to expression, expressed by the venom gland.

The protein resides in the secreted. It catalyses the reaction an N-(acyl)-sphingosylphosphocholine = an N-(acyl)-sphingosyl-1,3-cyclic phosphate + choline. It carries out the reaction an N-(acyl)-sphingosylphosphoethanolamine = an N-(acyl)-sphingosyl-1,3-cyclic phosphate + ethanolamine. The enzyme catalyses a 1-acyl-sn-glycero-3-phosphocholine = a 1-acyl-sn-glycero-2,3-cyclic phosphate + choline. The catalysed reaction is a 1-acyl-sn-glycero-3-phosphoethanolamine = a 1-acyl-sn-glycero-2,3-cyclic phosphate + ethanolamine. In terms of biological role, dermonecrotic toxins cleave the phosphodiester linkage between the phosphate and headgroup of certain phospholipids (sphingolipid and lysolipid substrates), forming an alcohol (often choline) and a cyclic phosphate. This toxin acts on sphingomyelin (SM). It may also act on ceramide phosphoethanolamine (CPE), lysophosphatidylcholine (LPC) and lysophosphatidylethanolamine (LPE), but not on lysophosphatidylserine (LPS), and lysophosphatidylglycerol (LPG). It acts by transphosphatidylation, releasing exclusively cyclic phosphate products as second products. Induces dermonecrosis, hemolysis, increased vascular permeability, edema, inflammatory response, and platelet aggregation. This chain is Dermonecrotic toxin SpeSicTox-betaIIA2i, found in Sicarius peruensis (Six-eyed sand spider).